The primary structure comprises 424 residues: Serine hydroxymethyltransferase 2 (424 aa).

(6S)-5,6,7,8-tetrahydrofolate contacts are provided by residues L125 and 129-131; that span reads GHL. K234 carries the N6-(pyridoxal phosphate)lysine modification. E250 lines the (6S)-5,6,7,8-tetrahydrofolate pocket.

Belongs to the SHMT family. In terms of assembly, homodimer. The cofactor is pyridoxal 5'-phosphate.

The protein localises to the cytoplasm. The catalysed reaction is (6R)-5,10-methylene-5,6,7,8-tetrahydrofolate + glycine + H2O = (6S)-5,6,7,8-tetrahydrofolate + L-serine. Its pathway is one-carbon metabolism; tetrahydrofolate interconversion. It participates in amino-acid biosynthesis; glycine biosynthesis; glycine from L-serine: step 1/1. In terms of biological role, catalyzes the reversible interconversion of serine and glycine with tetrahydrofolate (THF) serving as the one-carbon carrier. This reaction serves as the major source of one-carbon groups required for the biosynthesis of purines, thymidylate, methionine, and other important biomolecules. Also exhibits THF-independent aldolase activity toward beta-hydroxyamino acids, producing glycine and aldehydes, via a retro-aldol mechanism. This is Serine hydroxymethyltransferase 2 from Cupriavidus pinatubonensis (strain JMP 134 / LMG 1197) (Cupriavidus necator (strain JMP 134)).